Here is a 335-residue protein sequence, read N- to C-terminus: Probable geranylgeranyl transferase type-2 subunit beta (335 aa).

PFTB repeat units lie at residues Thr74 to Asn115, Ala122 to Gly163, Ile170 to Gly211, Arg218 to Gly259, and Ser266 to Leu312. Geranylgeranyl diphosphate is bound by residues His196–Gly198 and Arg238–Trp250. Zn(2+)-binding residues include Asp244, Cys246, and His296.

It belongs to the protein prenyltransferase subunit beta family. In terms of assembly, heterodimer of an alpha and a beta subunit. The cofactor is Zn(2+).

It catalyses the reaction geranylgeranyl diphosphate + L-cysteinyl-[protein] = S-geranylgeranyl-L-cysteinyl-[protein] + diphosphate. Functionally, catalyzes the transfer of a geranyl-geranyl moiety from geranyl-geranyl pyrophosphate to both cysteines in Rab proteins with an -XXCC, -XCXC and -CCXX C-terminal. This is Probable geranylgeranyl transferase type-2 subunit beta (ggtb-1) from Caenorhabditis elegans.